The sequence spans 158 residues: Lipoprotein signal peptidase (158 aa).

The next 3 helical transmembrane spans lie at 12–32 (LFWW…AWIV), 46–66 (IIPG…FSLF), and 71–91 (IWLR…AILG). Residues Asp124 and Asp140 contribute to the active site. The chain crosses the membrane as a helical span at residues 135–155 (VFNVADIAINIGIVCLLWSAW).

It belongs to the peptidase A8 family.

Its subcellular location is the cell inner membrane. It catalyses the reaction Release of signal peptides from bacterial membrane prolipoproteins. Hydrolyzes -Xaa-Yaa-Zaa-|-(S,diacylglyceryl)Cys-, in which Xaa is hydrophobic (preferably Leu), and Yaa (Ala or Ser) and Zaa (Gly or Ala) have small, neutral side chains.. The protein operates within protein modification; lipoprotein biosynthesis (signal peptide cleavage). In terms of biological role, this protein specifically catalyzes the removal of signal peptides from prolipoproteins. The chain is Lipoprotein signal peptidase from Thermosynechococcus vestitus (strain NIES-2133 / IAM M-273 / BP-1).